We begin with the raw amino-acid sequence, 279 residues long: Shikimate dehydrogenase (NADP(+)) (279 aa).

Residues 21–23 and T68 contribute to the shikimate site; that span reads SMS. K72 acts as the Proton acceptor in catalysis. Positions 93 and 108 each coordinate shikimate. Residues 130-134 and L219 contribute to the NADP(+) site; that span reads GAGGA. Position 221 (Y221) interacts with shikimate. G242 contributes to the NADP(+) binding site.

It belongs to the shikimate dehydrogenase family. Homodimer.

The enzyme catalyses shikimate + NADP(+) = 3-dehydroshikimate + NADPH + H(+). It participates in metabolic intermediate biosynthesis; chorismate biosynthesis; chorismate from D-erythrose 4-phosphate and phosphoenolpyruvate: step 4/7. Functionally, involved in the biosynthesis of the chorismate, which leads to the biosynthesis of aromatic amino acids. Catalyzes the reversible NADPH linked reduction of 3-dehydroshikimate (DHSA) to yield shikimate (SA). The polypeptide is Shikimate dehydrogenase (NADP(+)) (Oleidesulfovibrio alaskensis (strain ATCC BAA-1058 / DSM 17464 / G20) (Desulfovibrio alaskensis)).